Reading from the N-terminus, the 692-residue chain is Elongation factor G (692 aa).

The 276-residue stretch at 8–283 (NRIRNIGIAA…AVIDYLPAPT (276 aa)) folds into the tr-type G domain. GTP-binding positions include 17–24 (AHIDAGKT), 81–85 (DTPGH), and 135–138 (NKMD).

The protein belongs to the TRAFAC class translation factor GTPase superfamily. Classic translation factor GTPase family. EF-G/EF-2 subfamily.

Its subcellular location is the cytoplasm. Functionally, catalyzes the GTP-dependent ribosomal translocation step during translation elongation. During this step, the ribosome changes from the pre-translocational (PRE) to the post-translocational (POST) state as the newly formed A-site-bound peptidyl-tRNA and P-site-bound deacylated tRNA move to the P and E sites, respectively. Catalyzes the coordinated movement of the two tRNA molecules, the mRNA and conformational changes in the ribosome. In Helicobacter pylori (strain HPAG1), this protein is Elongation factor G.